The sequence spans 295 residues: Acetylglutamate kinase (295 aa).

Substrate-binding positions include 66–67 (GG), R88, and N193.

This sequence belongs to the acetylglutamate kinase family. ArgB subfamily.

It localises to the cytoplasm. The catalysed reaction is N-acetyl-L-glutamate + ATP = N-acetyl-L-glutamyl 5-phosphate + ADP. It functions in the pathway amino-acid biosynthesis; L-arginine biosynthesis; N(2)-acetyl-L-ornithine from L-glutamate: step 2/4. Catalyzes the ATP-dependent phosphorylation of N-acetyl-L-glutamate. This is Acetylglutamate kinase from Rhizobium johnstonii (strain DSM 114642 / LMG 32736 / 3841) (Rhizobium leguminosarum bv. viciae).